We begin with the raw amino-acid sequence, 278 residues long: Ras-related protein Rab-40A-like (278 aa).

GTP-binding residues include glycine 26, lysine 27, and serine 28. Serine 28 is a Mg(2+) binding site. The tract at residues 41-49 is switch-I; it reads SPYSHLGGI. Residue aspartate 69 coordinates Mg(2+). Residues glycine 72, asparagine 126, and arginine 127 each contribute to the GTP site. The tract at residues 72-88 is switch-II; sequence GQGRFCTIFRSYSRGAQ. Residues 175–228 enclose the SOCS box domain; sequence LLRHRLNWLGRPSKVLSLQDLCCRTIVSCTPVHLVDKLPLPIALRSHLKSFSMA. Residue cysteine 270 is the site of S-palmitoyl cysteine attachment. The S-geranylgeranyl cysteine moiety is linked to residue cysteine 275.

This sequence belongs to the small GTPase superfamily. Rab family. The cofactor is Mg(2+). As to expression, expressed in brain, lung, heart, skeletal muscle, kidney and liver. Highest expression in brain. Expressed in fetal brain and kidney.

It is found in the membrane. The protein localises to the cytoplasm. Its subcellular location is the mitochondrion. It catalyses the reaction GTP + H2O = GDP + phosphate + H(+). It participates in protein modification; protein ubiquitination. Its activity is regulated as follows. Regulated by guanine nucleotide exchange factors (GEFs) which promote the exchange of bound GDP for free GTP. Regulated by GTPase activating proteins (GAPs) which increase the GTP hydrolysis activity. Inhibited by GDP dissociation inhibitors (GDIs). In terms of biological role, may act as substrate-recognition component of the ECS(RAB40) E3 ubiquitin ligase complex which mediates the ubiquitination and subsequent proteasomal degradation of target proteins. The Rab40 subfamily belongs to the Rab family that are key regulators of intracellular membrane trafficking, from the formation of transport vesicles to their fusion with membranes. Rabs cycle between an inactive GDP-bound form and an active GTP-bound form that is able to recruit to membranes different sets of downstream effectors directly responsible for vesicle formation, movement, tethering and fusion. The chain is Ras-related protein Rab-40A-like from Homo sapiens (Human).